A 711-amino-acid polypeptide reads, in one-letter code: Polyribonucleotide nucleotidyltransferase (711 aa).

Mg(2+) is bound by residues Asp486 and Asp492. The KH domain occupies 553 to 612 (PRIHTIKINPDKIKDVIGKGGSVIRALTEETGTTIEIEDDGTVKIAATDGEKAKHAIRRI). The S1 motif domain maps to 622–690 (GRIYNGKVTR…RQGRVRLSIK (69 aa)). Positions 690 to 711 (KEATEQSQPAAAPEAPAAEQGE) are disordered. The segment covering 694-711 (EQSQPAAAPEAPAAEQGE) has biased composition (low complexity).

Belongs to the polyribonucleotide nucleotidyltransferase family. In terms of assembly, component of the RNA degradosome, which is a multiprotein complex involved in RNA processing and mRNA degradation. Mg(2+) is required as a cofactor.

The protein localises to the cytoplasm. It catalyses the reaction RNA(n+1) + phosphate = RNA(n) + a ribonucleoside 5'-diphosphate. In terms of biological role, involved in mRNA degradation. Catalyzes the phosphorolysis of single-stranded polyribonucleotides processively in the 3'- to 5'-direction. The chain is Polyribonucleotide nucleotidyltransferase from Citrobacter koseri (strain ATCC BAA-895 / CDC 4225-83 / SGSC4696).